A 337-amino-acid chain; its full sequence is Draxin (337 aa).

A signal peptide spans 1–24 (MLLLALLLLLELSLAGSLGPGSSA). Disordered regions lie at residues 36–67 (GPALWTPQASHHRRRGLGKKERGPGTPGWTQD), 107–133 (RPYPEKETQAPGSERVKKRGREHKRRK), and 234–261 (WPSTRKKEKHRGKLSSDGNETSPAKGEP). 2 stretches are compositionally biased toward basic residues: residues 122-133 (VKKRGREHKRRK) and 237-246 (TRKKEKHRGK). N-linked (GlcNAc...) asparagine glycosylation occurs at asparagine 252.

This sequence belongs to the draxin family. Interacts with LRP6.

The protein resides in the secreted. Chemorepulsive axon guidance protein required for the development of spinal cord and forebrain commissures. Acts as a chemorepulsive guidance protein for commissural axons during development. Able to inhibit or repel neurite outgrowth from dorsal spinal cord. Inhibits the stabilization of cytosolic beta-catenin (CTNNB1) via its interaction with LRP6, thereby acting as an antagonist of Wnt signaling pathway. The protein is Draxin of Bos taurus (Bovine).